A 138-amino-acid chain; its full sequence is Large ribosomal subunit protein eL27 (138 aa).

It belongs to the eukaryotic ribosomal protein eL27 family.

This Solanum tuberosum (Potato) protein is Large ribosomal subunit protein eL27 (RPL27).